The following is a 129-amino-acid chain: uncharacterized protein (129 aa).

It belongs to the asfivirus C129R family.

The protein localises to the virion. Its function is as follows. Plays a role in the inhibition of type I interferon signaling pathway. Mechanistically, specifically interacts with 2',3'-cGAMP and cleaves it via its phosphodiesterase activity. In turn, prevents 2',3'-cGAMP interaction with host ER-resident STING1 leading to inhibition of downstream signaling pathway and type I interferon production. This is an uncharacterized protein from African swine fever virus (strain Badajoz 1971 Vero-adapted) (Ba71V).